Reading from the N-terminus, the 517-residue chain is Beclin-1-like protein (517 aa).

Residues 76–106 (LPRHKPPQSQGIPPRPRGASSPQPDATQSGK) form a disordered region. Residues 95–105 (SSPQPDATQSG) show a composition bias toward polar residues. Residues 172 to 266 (CLECMRVLSD…NRFNELEDRY (95 aa)) adopt a coiled-coil conformation.

Belongs to the beclin family. Component of a phosphatidylinositol 3-kinase (PI3K) complex composed of ATG6, SH3P2 and FREE1. Interacts with SINAT1, SINAT2, SINAT5, SINAT6, TRAF1A and TRAF1B. Interacts with TUBB8/TUB8. Component of a complex made of VPS38/USL1 and PI3K main subunits such as VPS15, ATG6/VPS30 and VPS34. Binds directly to VPS38/USL1. Ubiquitinated. The interaction with SINAT1 or SINAT2, and the presence of TRAF1A/MUSE14 and TRAF1B/MUSE13, mediates its proteasome-dependent degradation. In terms of tissue distribution, highly expressed in mature pollen grains. Expressed in roots, leaves, stems, flowers and siliques.

It localises to the cytoplasm. The protein resides in the cytoskeleton. Functionally, required for normal plant development. Required for pollen germination. Required for autophagic activity. Required to limit the pathogen-associated cell death response. May be involved in vacuolar protein sorting. Binds to microtubules. May facilitate efficient recruitment of other ATG proteins to assemble scaffolds for autophagosome biogenesis. In Arabidopsis thaliana (Mouse-ear cress), this protein is Beclin-1-like protein.